The sequence spans 427 residues: Cyclin-L1-1 (427 aa).

The tract at residues His258–Gln427 is disordered. Residues Asp263–Ala276 are compositionally biased toward polar residues. Basic and acidic residues-rich tracts occupy residues Gln289–Lys311, Lys328–Arg382, Asp390–Lys400, and Arg407–Lys421.

This sequence belongs to the cyclin family. Cyclin L subfamily.

The sequence is that of Cyclin-L1-1 (CYCL1-1) from Oryza sativa subsp. japonica (Rice).